Here is an 893-residue protein sequence, read N- to C-terminus: MFPLKDAEMGAFTFFASALPHDVCGSNGLPLTPNSIKILGRFQILKTITHPRLCQYVDISRGKHERLVVVAEHCERSLEDLLRERKPVSHSTVLCIAYEVLEGLHYLNKHGIVHRALSPHNILLDRKGHIKLAKFGLYHMTAHGDDVDFPIGYPSYLAPEVIAQGIPKTTDHVPSEKPLPSGPKSDVWSLGIILFELCVGRKLFQSLDVSERVKFLLTLGCVDDTIIVLAEEHGCLDIIKELPENVINILKKCLTFHPSKRPTPDELMKDQVFSEVSPLYTPFIKPASLFSSSLRCADLTLPEDISDLCKDIDNDYLAERSIEEVYYLWCLAGGDLEKELINKEIIRSKPPVCTLPNFLFEDGESFGQGRDRSSLLDDTTVTLSLCQLRNRLKDVGGEAFYPLLEDDQSNLPHSNSNNELSAAATLPLIIRERDTEYQLNRIILFDRLLKAYPYKKNQIWKEARVDIPPLMRGLTWAALLGVEGAIHAKYDAIDKDTPIPTDRQIEVDIPRCHQYDELLSSPEGHAKFRRVLKAWVVSHPDLVYWQGLDSLCAPFLYLNFNNEALAYACMSAFIPKYLYNFFLKDNSHVIQEYLTVFSQMIAFHDPELSNHLNEIGFIPDLYAIPWFLTMFTHVFPLHKIFHLWDTLLLGNSSFPFCIGVAILQQLRDRLLANGFNECILLFSDLPEIDIERCVRESVNLFCWTPKSATYRQHAQPPKPASESSVVRSSAPYFSAECTDPPKTDLSRESIPLSDLKSEVSPRISAEDLIDLCELTVTGHFKTPTKKTKSSKPKLLVVDIRNSEDFVRGHIAGSINIPFSAAFTAEGELSQGPYTTMLHNFKGKVIVVVGHVAKQTAEFAAHLVKMKYPRVCILDGGINKIRPTGLLTVPSPQI.

In terms of domain architecture, Protein kinase spans 1–273; that stretch reads MFPLKDAEMG…PDELMKDQVF (273 aa). The 186-residue stretch at 466–651 folds into the Rab-GAP TBC domain; sequence DIPPLMRGLT…HLWDTLLLGN (186 aa).

The protein belongs to the protein kinase superfamily. In terms of assembly, component of the FERRY complex composed of five subunits, TBCK, PPP1R21, FERRY3, CRYZL1 and GATD1 with a ratio of 1:2:1:2:4, respectively.

It localises to the cytoplasm. The protein localises to the cytoskeleton. The protein resides in the spindle. Its subcellular location is the midbody. It is found in the early endosome. Its function is as follows. Component of the FERRY complex (Five-subunit Endosomal Rab5 and RNA/ribosome intermediary). The FERRY complex directly interacts with mRNAs and RAB5A, and functions as a RAB5A effector involved in the localization and the distribution of specific mRNAs most likely by mediating their endosomal transport. The complex recruits mRNAs and ribosomes to early endosomes through direct mRNA-interaction. Also involved in the modulation of mTOR signaling and expression of mTOR complex components. Involved in the control of actin-cytoskeleton organization. This chain is TBC domain-containing protein kinase-like protein (Tbck), found in Mus musculus (Mouse).